Here is a 320-residue protein sequence, read N- to C-terminus: ATP-dependent 6-phosphofructokinase (320 aa).

Gly-11 is an ATP binding site. 21-25 (RAVVR) lines the ADP pocket. Residues 72–73 (RC) and 102–105 (GDGS) contribute to the ATP site. Mg(2+) is bound at residue Asp-103. 125-127 (TID) is a binding site for substrate. The active-site Proton acceptor is the Asp-127. An ADP-binding site is contributed by Arg-154. Substrate contacts are provided by residues Arg-162 and 169-171 (MGR). ADP-binding positions include 185 to 187 (GAE) and 214 to 216 (KTH). Residues Glu-223, Arg-244, and 250-253 (HIQR) each bind substrate.

The protein belongs to the phosphofructokinase type A (PFKA) family. ATP-dependent PFK group I subfamily. Prokaryotic clade 'B1' sub-subfamily. In terms of assembly, homotetramer. Mg(2+) is required as a cofactor.

The protein resides in the cytoplasm. It catalyses the reaction beta-D-fructose 6-phosphate + ATP = beta-D-fructose 1,6-bisphosphate + ADP + H(+). The protein operates within carbohydrate degradation; glycolysis; D-glyceraldehyde 3-phosphate and glycerone phosphate from D-glucose: step 3/4. With respect to regulation, allosterically activated by ADP and other diphosphonucleosides, and allosterically inhibited by phosphoenolpyruvate. In terms of biological role, catalyzes the phosphorylation of D-fructose 6-phosphate to fructose 1,6-bisphosphate by ATP, the first committing step of glycolysis. This chain is ATP-dependent 6-phosphofructokinase, found in Clostridium botulinum (strain Eklund 17B / Type B).